Consider the following 64-residue polypeptide: Large ribosomal subunit protein bL28c (64 aa).

This sequence belongs to the bacterial ribosomal protein bL28 family.

The protein localises to the plastid. It is found in the chloroplast. The protein is Large ribosomal subunit protein bL28c of Gracilaria tenuistipitata var. liui (Red alga).